Here is a 102-residue protein sequence, read N- to C-terminus: Large ribosomal subunit protein bL21 (102 aa).

This sequence belongs to the bacterial ribosomal protein bL21 family. As to quaternary structure, part of the 50S ribosomal subunit. Contacts protein L20.

This protein binds to 23S rRNA in the presence of protein L20. In Bacillus anthracis (strain A0248), this protein is Large ribosomal subunit protein bL21.